The following is a 57-amino-acid chain: Large ribosomal subunit protein bL32 (57 aa).

It belongs to the bacterial ribosomal protein bL32 family.

The sequence is that of Large ribosomal subunit protein bL32 from Streptomyces griseus subsp. griseus (strain JCM 4626 / CBS 651.72 / NBRC 13350 / KCC S-0626 / ISP 5235).